The primary structure comprises 89 residues: Small ribosomal subunit protein uS14A (89 aa).

It belongs to the universal ribosomal protein uS14 family. Part of the 30S ribosomal subunit. Contacts proteins S3 and S10.

Binds 16S rRNA, required for the assembly of 30S particles and may also be responsible for determining the conformation of the 16S rRNA at the A site. The chain is Small ribosomal subunit protein uS14A from Bacillus velezensis (strain DSM 23117 / BGSC 10A6 / LMG 26770 / FZB42) (Bacillus amyloliquefaciens subsp. plantarum).